The primary structure comprises 290 residues: Homeobox protein EMX1 (290 aa).

Residues Pro-192 to Lys-251 constitute a DNA-binding region (homeobox). The tract at residues Arg-249 to Asp-290 is disordered. The span at Gln-250–Lys-263 shows a compositional bias: basic and acidic residues.

This sequence belongs to the EMX homeobox family. In terms of assembly, interacts with WRD11 (via the N-terminal and the central portion of the protein); the interaction associates EMX1 with GLI3. As to expression, cerebral cortex.

The protein localises to the nucleus. Its subcellular location is the cytoplasm. In terms of biological role, transcription factor, which in cooperation with EMX2, acts to generate the boundary between the roof and archipallium in the developing brain. May function in combinations with OTX1/2 to specify cell fates in the developing central nervous system. The protein is Homeobox protein EMX1 of Homo sapiens (Human).